The following is a 1009-amino-acid chain: Dihydropyrimidine dehydrogenase [NADP(+)] (1009 aa).

Residues 69 to 99 (RGALFESARCLKCADAPCQKGCPTQLDIKSF) enclose the 4Fe-4S ferredoxin-type 1 domain. [4Fe-4S] cluster contacts are provided by Cys78, Cys81, Cys86, and Cys90. FAD is bound at residue Val128. [4Fe-4S] cluster contacts are provided by Cys129, Cys135, Cys139, and Gln155. Residues 193–197 (GCGPT), 217–225 (EKEQYLGGL), Arg234, and Leu260 each bind FAD. Residues 339-342 (AGDT), 363-364 (RR), Arg370, 436-438 (AFG), and 479-484 (DLVGNG) contribute to the NADP(+) site. 478 to 486 (GDLVGNGTT) lines the FAD pocket. FMN is bound by residues Ser548 and 572 to 573 (KT). Residues Asn607 and 666–668 (NLS) each bind substrate. The active-site Proton acceptor is Cys669. Residue Lys707 coordinates FMN. A substrate-binding site is contributed by 734–735 (NT). Residues Gly765, 791–793 (TGG), and 814–815 (CS) contribute to the FMN site. 2 4Fe-4S ferredoxin-type domains span residues 932-964 (VVAL…FDGK) and 965-995 (THIP…MVPR). [4Fe-4S] cluster-binding residues include Cys941, Cys944, Cys947, Cys951, Cys974, Cys977, Cys980, and Cys984.

This sequence belongs to the dihydropyrimidine dehydrogenase family. In terms of assembly, homodimer. [4Fe-4S] cluster is required as a cofactor. The cofactor is FAD. Requires FMN as cofactor.

The protein localises to the cytoplasm. It carries out the reaction 5,6-dihydrouracil + NADP(+) = uracil + NADPH + H(+). Its pathway is amino-acid biosynthesis; beta-alanine biosynthesis. Involved in pyrimidine base degradation. Catalyzes the reduction of uracil and thymine. The chain is Dihydropyrimidine dehydrogenase [NADP(+)] (pyd1) from Dictyostelium discoideum (Social amoeba).